Reading from the N-terminus, the 207-residue chain is Probable GTP-binding protein EngB (207 aa).

The 176-residue stretch at 24–199 folds into the EngB-type G domain; that stretch reads GGYEVAFAGR…RGIVGGWLGL (176 aa). GTP contacts are provided by residues 32 to 39, 59 to 63, 77 to 80, 144 to 147, and 178 to 180; these read GRSNAGKS, GRTQQ, DLPG, TKAD, and YSG. Residues serine 39 and threonine 61 each contribute to the Mg(2+) site.

This sequence belongs to the TRAFAC class TrmE-Era-EngA-EngB-Septin-like GTPase superfamily. EngB GTPase family. Requires Mg(2+) as cofactor.

In terms of biological role, necessary for normal cell division and for the maintenance of normal septation. This is Probable GTP-binding protein EngB from Xanthomonas campestris pv. campestris (strain 8004).